Here is a 452-residue protein sequence, read N- to C-terminus: Probable pectate lyase 9 (452 aa).

Residues 1–25 form the signal peptide; sequence MATSSLKLTSACFVLLFIFVGCVLT. 4 N-linked (GlcNAc...) asparagine glycosylation sites follow: Asn-88, Asn-139, Asn-214, and Asn-233. Residue Asp-250 coordinates Ca(2+). Residue Asn-271 is glycosylated (N-linked (GlcNAc...) asparagine). Residues Asp-274 and Asp-278 each coordinate Ca(2+). Residues Asn-281 and Asn-305 are each glycosylated (N-linked (GlcNAc...) asparagine). The active site involves Arg-330. Residue Asn-374 is glycosylated (N-linked (GlcNAc...) asparagine).

This sequence belongs to the polysaccharide lyase 1 family. Ca(2+) is required as a cofactor.

The catalysed reaction is Eliminative cleavage of (1-&gt;4)-alpha-D-galacturonan to give oligosaccharides with 4-deoxy-alpha-D-galact-4-enuronosyl groups at their non-reducing ends.. It functions in the pathway glycan metabolism; pectin degradation; 2-dehydro-3-deoxy-D-gluconate from pectin: step 2/5. This chain is Probable pectate lyase 9, found in Arabidopsis thaliana (Mouse-ear cress).